The sequence spans 190 residues: Elongation factor P (190 aa).

Belongs to the elongation factor P family.

The protein localises to the cytoplasm. It participates in protein biosynthesis; polypeptide chain elongation. Functionally, involved in peptide bond synthesis. Stimulates efficient translation and peptide-bond synthesis on native or reconstituted 70S ribosomes in vitro. Probably functions indirectly by altering the affinity of the ribosome for aminoacyl-tRNA, thus increasing their reactivity as acceptors for peptidyl transferase. The sequence is that of Elongation factor P from Amoebophilus asiaticus (strain 5a2).